Consider the following 358-residue polypeptide: Putative myc-like protein MYCLP1 (358 aa).

2 disordered regions span residues A150 to K171 and Q219 to D245. The span at P227–D242 shows a compositional bias: basic and acidic residues. Residues W274–E326 enclose the bHLH domain.

In terms of assembly, efficient DNA binding requires dimerization with another bHLH protein. Binds DNA as a heterodimer with MAX. In terms of tissue distribution, detected in adult testis.

The protein localises to the nucleus. The polypeptide is Putative myc-like protein MYCLP1 (MYCLP1) (Homo sapiens (Human)).